Reading from the N-terminus, the 226-residue chain is Cytidylate kinase (226 aa).

Residue 10 to 18 participates in ATP binding; it reads GPASSGKST.

It belongs to the cytidylate kinase family. Type 1 subfamily.

The protein localises to the cytoplasm. The catalysed reaction is CMP + ATP = CDP + ADP. It catalyses the reaction dCMP + ATP = dCDP + ADP. The polypeptide is Cytidylate kinase (Streptococcus uberis (strain ATCC BAA-854 / 0140J)).